Reading from the N-terminus, the 605-residue chain is Dynein axonemal intermediate chain 2 (605 aa).

7 WD repeats span residues 150–203 (KTIN…IWDL), 208–246 (KPEL…CWDT), 253–294 (AELS…WWDI), 301–347 (TEVV…SCNR), 355–393 (KIVC…IWSE), 399–437 (SIMW…IWDF), and 443–481 (DPTL…LLEV). The disordered stretch occupies residues 568 to 605 (IKLTPVPQQPSPEEDQVVEEGEEAAGEEGDEEVEEDLA). The span at 579–605 (PEEDQVVEEGEEAAGEEGDEEVEEDLA) shows a compositional bias: acidic residues.

This sequence belongs to the dynein intermediate chain family. As to quaternary structure, consists of at least two heavy chains and a number of intermediate and light chains. Interacts with DNAAF2. Interacts with DNAAF6/PIH1D3. Interacts with HEATR2; probably involved in outer arm dynein assembly. Interacts with CFAP53. In terms of tissue distribution, highly expressed in trachea and testis. Expressed in respiratory ciliated cells (at protein level).

Its subcellular location is the cytoplasm. It localises to the cytoskeleton. The protein localises to the cilium axoneme. The protein resides in the dynein axonemal particle. Its function is as follows. Part of the dynein complex of respiratory cilia. This chain is Dynein axonemal intermediate chain 2, found in Homo sapiens (Human).